A 56-amino-acid chain; its full sequence is Photosystem II reaction center protein K (56 aa).

The propeptide occupies 1–19 (MFNIFLDDAFIHSNNPFFG). A helical transmembrane segment spans residues 35 to 55 (MPIIPVLSFLLAFVWQAAVSF).

Belongs to the PsbK family. PSII is composed of 1 copy each of membrane proteins PsbA, PsbB, PsbC, PsbD, PsbE, PsbF, PsbH, PsbI, PsbJ, PsbK, PsbL, PsbM, PsbT, PsbX, PsbY, PsbZ, Psb30/Ycf12, at least 3 peripheral proteins of the oxygen-evolving complex and a large number of cofactors. It forms dimeric complexes.

Its subcellular location is the plastid. It is found in the chloroplast thylakoid membrane. One of the components of the core complex of photosystem II (PSII). PSII is a light-driven water:plastoquinone oxidoreductase that uses light energy to abstract electrons from H(2)O, generating O(2) and a proton gradient subsequently used for ATP formation. It consists of a core antenna complex that captures photons, and an electron transfer chain that converts photonic excitation into a charge separation. The protein is Photosystem II reaction center protein K of Pinus thunbergii (Japanese black pine).